A 450-amino-acid chain; its full sequence is ATP-dependent protease ATPase subunit HslU (450 aa).

Residues Val-29, 71–76 (GVGKTE), Asp-261, Glu-328, and Arg-400 contribute to the ATP site.

This sequence belongs to the ClpX chaperone family. HslU subfamily. As to quaternary structure, a double ring-shaped homohexamer of HslV is capped on each side by a ring-shaped HslU homohexamer. The assembly of the HslU/HslV complex is dependent on binding of ATP.

The protein localises to the cytoplasm. ATPase subunit of a proteasome-like degradation complex; this subunit has chaperone activity. The binding of ATP and its subsequent hydrolysis by HslU are essential for unfolding of protein substrates subsequently hydrolyzed by HslV. HslU recognizes the N-terminal part of its protein substrates and unfolds these before they are guided to HslV for hydrolysis. The sequence is that of ATP-dependent protease ATPase subunit HslU from Rickettsia conorii (strain ATCC VR-613 / Malish 7).